Reading from the N-terminus, the 127-residue chain is NADPH-dependent 7-cyano-7-deazaguanine reductase (127 aa).

Cysteine 40 functions as the Thioimide intermediate in the catalytic mechanism. Aspartate 47 functions as the Proton donor in the catalytic mechanism. Substrate is bound by residues 62–64 (VEL) and 81–82 (HE).

Belongs to the GTP cyclohydrolase I family. QueF type 1 subfamily.

Its subcellular location is the cytoplasm. The catalysed reaction is 7-aminomethyl-7-carbaguanine + 2 NADP(+) = 7-cyano-7-deazaguanine + 2 NADPH + 3 H(+). Its pathway is tRNA modification; tRNA-queuosine biosynthesis. Functionally, catalyzes the NADPH-dependent reduction of 7-cyano-7-deazaguanine (preQ0) to 7-aminomethyl-7-deazaguanine (preQ1). This Campylobacter lari (strain RM2100 / D67 / ATCC BAA-1060) protein is NADPH-dependent 7-cyano-7-deazaguanine reductase.